Reading from the N-terminus, the 409-residue chain is Shaggy-related protein kinase NtK-1 (409 aa).

The interval 1–27 is disordered; the sequence is MTSVGLAPVSGLRESSSHSVGVDRLPE. Positions 73–357 constitute a Protein kinase domain; it reads YMAERIVGQG…ALEAVTHAFF (285 aa). Residues 79–87 and lysine 102 contribute to the ATP site; that span reads VGQGSFGVV. The active-site Proton acceptor is the aspartate 198.

The protein belongs to the protein kinase superfamily. CMGC Ser/Thr protein kinase family. GSK-3 subfamily. Autophosphorylated mainly on threonine and serine residues.

The catalysed reaction is L-seryl-[protein] + ATP = O-phospho-L-seryl-[protein] + ADP + H(+). The enzyme catalyses L-threonyl-[protein] + ATP = O-phospho-L-threonyl-[protein] + ADP + H(+). In terms of biological role, may mediate extracellular signals to regulate transcription in differentiating cells. This is Shaggy-related protein kinase NtK-1 (NTK-1) from Nicotiana tabacum (Common tobacco).